Reading from the N-terminus, the 341-residue chain is Spindolin (341 aa).

Positions 1–20 are cleaved as a signal peptide; it reads MNKLILISLIASLYQVEVDA.

As to quaternary structure, homodimer; disulfide-linked.

Its function is as follows. This protein is a spindle body protein. The chain is Spindolin (SPH) from Choristoneura biennis entomopoxvirus (CbEPV).